The sequence spans 340 residues: S-adenosylmethionine:tRNA ribosyltransferase-isomerase (340 aa).

The protein belongs to the QueA family. In terms of assembly, monomer.

The protein resides in the cytoplasm. It carries out the reaction 7-aminomethyl-7-carbaguanosine(34) in tRNA + S-adenosyl-L-methionine = epoxyqueuosine(34) in tRNA + adenine + L-methionine + 2 H(+). It functions in the pathway tRNA modification; tRNA-queuosine biosynthesis. Functionally, transfers and isomerizes the ribose moiety from AdoMet to the 7-aminomethyl group of 7-deazaguanine (preQ1-tRNA) to give epoxyqueuosine (oQ-tRNA). The polypeptide is S-adenosylmethionine:tRNA ribosyltransferase-isomerase (Nitratiruptor sp. (strain SB155-2)).